A 539-amino-acid polypeptide reads, in one-letter code: CTP synthase (539 aa).

Positions 1-268 (MADTKYIFVT…DETVLRKVGL (268 aa)) are amidoligase domain. Residue Ser15 participates in CTP binding. Ser15 is a binding site for UTP. 16-21 (SLGKGI) provides a ligand contact to ATP. Tyr56 provides a ligand contact to L-glutamine. Position 73 (Asp73) interacts with ATP. Mg(2+) is bound by residues Asp73 and Glu143. Residues 150 to 152 (DIE), 189 to 194 (KTKPTQ), and Lys225 each bind CTP. UTP contacts are provided by residues 189-194 (KTKPTQ) and Lys225. The Glutamine amidotransferase type-1 domain occupies 294–536 (TIALVGKYVE…IREAIKTRKK (243 aa)). L-glutamine is bound at residue Gly356. Cys383 functions as the Nucleophile; for glutamine hydrolysis in the catalytic mechanism. L-glutamine is bound by residues 384–387 (LGMQ), Glu407, and Arg464. Residues His509 and Glu511 contribute to the active site.

This sequence belongs to the CTP synthase family. Homotetramer.

It catalyses the reaction UTP + L-glutamine + ATP + H2O = CTP + L-glutamate + ADP + phosphate + 2 H(+). The catalysed reaction is L-glutamine + H2O = L-glutamate + NH4(+). The enzyme catalyses UTP + NH4(+) + ATP = CTP + ADP + phosphate + 2 H(+). It functions in the pathway pyrimidine metabolism; CTP biosynthesis via de novo pathway; CTP from UDP: step 2/2. Allosterically activated by GTP, when glutamine is the substrate; GTP has no effect on the reaction when ammonia is the substrate. The allosteric effector GTP functions by stabilizing the protein conformation that binds the tetrahedral intermediate(s) formed during glutamine hydrolysis. Inhibited by the product CTP, via allosteric rather than competitive inhibition. Functionally, catalyzes the ATP-dependent amination of UTP to CTP with either L-glutamine or ammonia as the source of nitrogen. Regulates intracellular CTP levels through interactions with the four ribonucleotide triphosphates. The chain is CTP synthase from Porphyromonas gingivalis (strain ATCC 33277 / DSM 20709 / CIP 103683 / JCM 12257 / NCTC 11834 / 2561).